Consider the following 150-residue polypeptide: Sulfur-rich protein, serovars L1/L3 (150 aa).

The segment at 1–20 (MSTVPVVQGAGSSNSAQDIS) is disordered. 2 helical membrane-spanning segments follow: residues 43–63 (VGLV…VSAA) and 69–89 (IYLA…ILSM).

The protein resides in the membrane. The polypeptide is Sulfur-rich protein, serovars L1/L3 (srp) (Chlamydia trachomatis).